Reading from the N-terminus, the 491-residue chain is Iota-carrageenase (491 aa).

Positions 1-23 (MRLYFRKLWLTNLFLGGALASSA) are cleaved as a signal peptide. 4 cysteine pairs are disulfide-bonded: Cys-269-Cys-298, Cys-336-Cys-360, Cys-408-Cys-476, and Cys-412-Cys-484.

This sequence belongs to the glycosyl hydrolase 82 family.

It localises to the secreted. It catalyses the reaction Endohydrolysis of 1,4-beta-D-linkages between D-galactose 4-sulfate and 3,6-anhydro-D-galactose-2-sulfate in iota-carrageenans.. Functionally, hydrolyzes iota-carrageenans, sulfated 1,3-alpha-1,4-beta galactans from red algal cell walls, with an inversion of anomeric configuration. Also active against hybrid iota-/nu-carrageenan, not active against kappa- or lambda-carrageenans. The chain is Iota-carrageenase from Alteromonas macleodii (Pseudoalteromonas macleodii).